Here is a 277-residue protein sequence, read N- to C-terminus: Orotidine 5'-phosphate decarboxylase (277 aa).

Substrate-binding positions include Asp40, Lys62–His64, Asp93–Thr102, Tyr229, and Arg247. The active-site Proton donor is the Lys95.

This sequence belongs to the OMP decarboxylase family.

The catalysed reaction is orotidine 5'-phosphate + H(+) = UMP + CO2. Its pathway is pyrimidine metabolism; UMP biosynthesis via de novo pathway; UMP from orotate: step 2/2. The chain is Orotidine 5'-phosphate decarboxylase (pyrG) from Aspergillus kawachii (White koji mold).